Reading from the N-terminus, the 295-residue chain is ATP synthase gamma chain (295 aa).

The protein belongs to the ATPase gamma chain family. F-type ATPases have 2 components, CF(1) - the catalytic core - and CF(0) - the membrane proton channel. CF(1) has five subunits: alpha(3), beta(3), gamma(1), delta(1), epsilon(1). CF(0) has three main subunits: a, b and c.

Its subcellular location is the cell inner membrane. Produces ATP from ADP in the presence of a proton gradient across the membrane. The gamma chain is believed to be important in regulating ATPase activity and the flow of protons through the CF(0) complex. The chain is ATP synthase gamma chain from Chlorobium phaeobacteroides (strain BS1).